Consider the following 231-residue polypeptide: GFP-like fluorescent chromoprotein FP506 (231 aa).

The 5-imidazolinone (Asn-Gly) cross-link spans 66–68 (NYG). 2,3-didehydrotyrosine is present on tyrosine 67.

It belongs to the GFP family. In terms of processing, contains a chromophore consisting of modified amino acid residues. The chromophore is formed by autocatalytic backbone condensation between Xaa-N and Gly-(N+2), and oxidation of Tyr-(N+1) to didehydrotyrosine. Maturation of the chromophore requires nothing other than molecular oxygen. The precise stereochemistry of the tyrosine has not been determined. Tentacle and oral disk.

In terms of biological role, pigment protein that is yellow-green in color. This chain is GFP-like fluorescent chromoprotein FP506, found in Zoanthus sp. (Green polyp).